The sequence spans 222 residues: Eukaryotic translation initiation factor 3 subunit K (222 aa).

One can recognise a PCI domain in the interval tyrosine 46–lysine 208.

It belongs to the eIF-3 subunit K family. As to quaternary structure, component of the eukaryotic translation initiation factor 3 (eIF-3) complex. The eIF-3 complex interacts with pix.

The protein resides in the cytoplasm. Functionally, component of the eukaryotic translation initiation factor 3 (eIF-3) complex, which is involved in protein synthesis of a specialized repertoire of mRNAs and, together with other initiation factors, stimulates binding of mRNA and methionyl-tRNAi to the 40S ribosome. The eIF-3 complex specifically targets and initiates translation of a subset of mRNAs involved in cell proliferation. This Drosophila mojavensis (Fruit fly) protein is Eukaryotic translation initiation factor 3 subunit K.